The chain runs to 260 residues: Thiazole synthase (260 aa).

The active-site Schiff-base intermediate with DXP is Lys102. Residues Gly163, 189-190 (AG), and 211-212 (NT) each bind 1-deoxy-D-xylulose 5-phosphate.

The protein belongs to the ThiG family. As to quaternary structure, homotetramer. Forms heterodimers with either ThiH or ThiS.

The protein resides in the cytoplasm. It carries out the reaction [ThiS sulfur-carrier protein]-C-terminal-Gly-aminoethanethioate + 2-iminoacetate + 1-deoxy-D-xylulose 5-phosphate = [ThiS sulfur-carrier protein]-C-terminal Gly-Gly + 2-[(2R,5Z)-2-carboxy-4-methylthiazol-5(2H)-ylidene]ethyl phosphate + 2 H2O + H(+). Its pathway is cofactor biosynthesis; thiamine diphosphate biosynthesis. Catalyzes the rearrangement of 1-deoxy-D-xylulose 5-phosphate (DXP) to produce the thiazole phosphate moiety of thiamine. Sulfur is provided by the thiocarboxylate moiety of the carrier protein ThiS. In vitro, sulfur can be provided by H(2)S. This is Thiazole synthase from Geotalea uraniireducens (strain Rf4) (Geobacter uraniireducens).